Here is a 232-residue protein sequence, read N- to C-terminus: Large ribosomal subunit protein uL1 (232 aa).

It belongs to the universal ribosomal protein uL1 family. In terms of assembly, part of the 50S ribosomal subunit.

Functionally, binds directly to 23S rRNA. The L1 stalk is quite mobile in the ribosome, and is involved in E site tRNA release. Protein L1 is also a translational repressor protein, it controls the translation of the L11 operon by binding to its mRNA. The chain is Large ribosomal subunit protein uL1 from Burkholderia mallei (strain NCTC 10247).